A 377-amino-acid chain; its full sequence is Deoxyribonuclease CdiA-o11 (377 aa).

The VENN CT cleavage motif motif lies at 81-84 (VENN). Positions 85 to 233 (YLSTNQSLTF…ISFMSRNTAT (149 aa)) are inner membrane translocation domain (IMTD), targets to YciB. The CT domain, sufficient to interact with CdiI stretch occupies residues 88–377 (TNQSLTFDKE…GVKVTVTQVK (290 aa)). The segment at 222–377 (AAISFMSRNT…GVKVTVTQVK (156 aa)) is has DNase activity in vivo, cannot be expressed in the absence of CdiI. Catalysis depends on residues Glu-257, Asp-278, Ser-289, and Lys-291. 2 residues coordinate Zn(2+): Glu-257 and Asp-278.

In terms of assembly, interacts with cognate immunity protein CdiI-o11-EC869, which blocks its toxic DNase activity. Zn(2+) serves as cofactor.

It is found in the target cell. The protein resides in the target cell cytoplasm. Its function is as follows. Toxic component of a toxin-immunity protein module, which functions as a cellular contact-dependent growth inhibition (CDI) system. CDI modules allow bacteria to communicate with and inhibit the growth of closely related neighboring bacteria in a contact-dependent fashion. The C-terminal 289 residues (the CT fragment) has a strong DNase activity in the presence of Zn(2+), completely degrading supercoiled and linear plasmids, and inhibits growth. In the presence of Mg(2+) it nicks dsDNA. Toxic activity is neutralized by coexpression of the cognate immunity protein CdiI-o11-EC869, but not by non-cognate immunity proteins from other toxin-immunity modules or other strains of E.coli. Gains access to the cytoplasm of target cells by using integral inner membrane protein YciB. Functionally, expression of this locus confers protection against other bacteria carrying the locus. The polypeptide is Deoxyribonuclease CdiA-o11 (cdiA4) (Escherichia coli O157:H7 (strain EC869)).